The sequence spans 473 residues: Photosystem II CP43 reaction center protein (473 aa).

A propeptide spanning residues 1 to 14 (MKTLYSLRRFYPVE) is cleaved from the precursor. Thr-15 carries the N-acetylthreonine modification. The residue at position 15 (Thr-15) is a Phosphothreonine. Helical transmembrane passes span 69–93 (LFEVAHFVPEKPMYEQGLILLPHLA), 134–155 (LIGPETLEESFPFFGYVWKDKN), 178–200 (KALYFGGVYDTWAPGGGDVRKIT), 255–275 (KPFAWARRAFIWSGEAYLSYS), and 291–312 (WFNNTAYPSEFYGPTGPEASQA). Residue Glu-367 participates in [CaMn4O5] cluster binding. Residues 447–471 (RARAAAAGFEKGIDRDTEPVLSMTP) form a helical membrane-spanning segment.

Belongs to the PsbB/PsbC family. PsbC subfamily. As to quaternary structure, PSII is composed of 1 copy each of membrane proteins PsbA, PsbB, PsbC, PsbD, PsbE, PsbF, PsbH, PsbI, PsbJ, PsbK, PsbL, PsbM, PsbT, PsbX, PsbY, PsbZ, Psb30/Ycf12, at least 3 peripheral proteins of the oxygen-evolving complex and a large number of cofactors. It forms dimeric complexes. The cofactor is Binds multiple chlorophylls and provides some of the ligands for the Ca-4Mn-5O cluster of the oxygen-evolving complex. It may also provide a ligand for a Cl- that is required for oxygen evolution. PSII binds additional chlorophylls, carotenoids and specific lipids..

The protein resides in the plastid. It is found in the chloroplast thylakoid membrane. One of the components of the core complex of photosystem II (PSII). It binds chlorophyll and helps catalyze the primary light-induced photochemical processes of PSII. PSII is a light-driven water:plastoquinone oxidoreductase, using light energy to abstract electrons from H(2)O, generating O(2) and a proton gradient subsequently used for ATP formation. This is Photosystem II CP43 reaction center protein from Angiopteris evecta (Mule's foot fern).